The chain runs to 1495 residues: Chromosome partition protein MukB (1495 aa).

Gly60–Ser67 is an ATP binding site. 3 coiled-coil regions span residues Arg322 to Asp693, Glu861 to Ser1140, and Ile1233 to Ile1289. Residues Pro692–Arg809 form a flexible hinge region.

Belongs to the SMC family. MukB subfamily. In terms of assembly, homodimerization via its hinge domain. Binds to DNA via its C-terminal region. Interacts, and probably forms a ternary complex, with MukE and MukF via its C-terminal region. The complex formation is stimulated by calcium or magnesium. Interacts with tubulin-related protein FtsZ.

Its subcellular location is the cytoplasm. The protein resides in the nucleoid. Functionally, plays a central role in chromosome condensation, segregation and cell cycle progression. Functions as a homodimer, which is essential for chromosome partition. Involved in negative DNA supercoiling in vivo, and by this means organize and compact chromosomes. May achieve or facilitate chromosome segregation by condensation DNA from both sides of a centrally located replisome during cell division. This chain is Chromosome partition protein MukB, found in Pasteurella multocida (strain Pm70).